The chain runs to 551 residues: Glucose-6-phosphate isomerase (551 aa).

The Proton donor role is filled by Glu352. Residues His383 and Lys511 contribute to the active site.

The protein belongs to the GPI family.

It is found in the cytoplasm. The catalysed reaction is alpha-D-glucose 6-phosphate = beta-D-fructose 6-phosphate. It participates in carbohydrate biosynthesis; gluconeogenesis. Its pathway is carbohydrate degradation; glycolysis; D-glyceraldehyde 3-phosphate and glycerone phosphate from D-glucose: step 2/4. In terms of biological role, catalyzes the reversible isomerization of glucose-6-phosphate to fructose-6-phosphate. The polypeptide is Glucose-6-phosphate isomerase (Chlorobium luteolum (strain DSM 273 / BCRC 81028 / 2530) (Pelodictyon luteolum)).